The primary structure comprises 205 residues: Putative 3-methyladenine DNA glycosylase (205 aa).

Belongs to the DNA glycosylase MPG family.

This Bacillus anthracis (strain A0248) protein is Putative 3-methyladenine DNA glycosylase.